The sequence spans 361 residues: N-methyltransferase benX (361 aa).

Belongs to the methyltransferase superfamily.

It participates in secondary metabolite biosynthesis. Functionally, N-methyltransferase; part of the gene cluster that mediates the biosynthesis of benzomalvin A and D. The pathway begins with the loading of amino acid precursors onto the A domains of the non ribosomal peptide synthetases benY and benZ. BenY and the A1 domain of benZ are loaded with anthranilate (Anth), while the A2 domain of benZ is loaded with phenylalanine (Phe). N-methylation of Phe by the methyltransferase benX may happen before loading of Phe onto benZ, after loading of Phe, or after dipeptide formation. Condensation of Anth with the secondary amine of NmPhe or Phe is catalyzed by the C1 domain of benZ, forming a dipeptide intermediate. This is followed by in trans condensation of the Anth-NmPhe dipeptide with Anth bound to the T domain of benY by the C2 domain of benZ to form the linear tripeptide Anth-NmPhe-Anth. Cyclization and release of the tripeptide is then catalyzed by the C-terminal C domain of benY and the resulting 11-member macrocyclic intermediate is expected to spontaneously collapse to form the benzodiazepine core. Benzomalvin A is in conformational equilibrium with its atropisomer, benzomalvin D. The sequence is that of N-methyltransferase benX from Aspergillus terreus.